Here is a 92-residue protein sequence, read N- to C-terminus: Acylphosphatase (92 aa).

The Acylphosphatase-like domain occupies 5–92 (RAHVVVSGKV…GEFSGFKIAF (88 aa)). Residues R20 and N38 contribute to the active site.

It belongs to the acylphosphatase family.

It catalyses the reaction an acyl phosphate + H2O = a carboxylate + phosphate + H(+). This is Acylphosphatase (acyP) from Pelotomaculum thermopropionicum (strain DSM 13744 / JCM 10971 / SI).